The following is a 90-amino-acid chain: Probable oxaloacetate decarboxylase gamma chain 2 (90 aa).

The chain crosses the membrane as a helical span at residues 10–32 (GINLLTLGMGFVFIFLIFLVYAT).

This sequence belongs to the OadG family. Heterotrimer of an alpha, a beta and a gamma subunit. Na(+) is required as a cofactor.

It localises to the cell membrane. It catalyses the reaction oxaloacetate + 2 Na(+)(in) + H(+) = pyruvate + 2 Na(+)(out) + CO2. Catalyzes the decarboxylation of oxaloacetate coupled to Na(+) translocation. This chain is Probable oxaloacetate decarboxylase gamma chain 2 (oadG2), found in Vibrio cholerae serotype O1 (strain ATCC 39315 / El Tor Inaba N16961).